The sequence spans 304 residues: MAAQRYILVVAHTGRRDSLAAGVSVCRQLLAAGVVPVLSEGERRDLLAAEPELATVVALGAEVPPAELELVIVLGGDGTILRAAELVRGCPAPLLGVNLGHVGFLAESERDDLETAVARGLAKDYEVEERMTLSARVKVGEEVVYESWALNEATVEKANRERVLEVVIEADGRPMSSFGCDGVVMSTPTGSTAYSFSAGGPVVWPGVAALLLVPLSAHALFSRPLVVDADSSLAVELLEGAGGEGVLWCDGRRAFDLPRGARVVVRRSPIPVRLARLHPGPFTDRLVRKFTLPVTGWRGPDGRD.

Asp77 (proton acceptor) is an active-site residue. Residues 77–78 (DG), Arg82, 151–152 (NE), Arg162, Asp181, and 192–197 (TAYSFS) contribute to the NAD(+) site.

It belongs to the NAD kinase family. The cofactor is a divalent metal cation.

The protein resides in the cytoplasm. The catalysed reaction is NAD(+) + ATP = ADP + NADP(+) + H(+). Its function is as follows. Involved in the regulation of the intracellular balance of NAD and NADP, and is a key enzyme in the biosynthesis of NADP. Catalyzes specifically the phosphorylation on 2'-hydroxyl of the adenosine moiety of NAD to yield NADP. The protein is NAD kinase of Leifsonia xyli subsp. xyli (strain CTCB07).